The sequence spans 276 residues: 2-dehydro-3-deoxyphosphooctonate aldolase (276 aa).

The protein belongs to the KdsA family.

Its subcellular location is the cytoplasm. It catalyses the reaction D-arabinose 5-phosphate + phosphoenolpyruvate + H2O = 3-deoxy-alpha-D-manno-2-octulosonate-8-phosphate + phosphate. It participates in carbohydrate biosynthesis; 3-deoxy-D-manno-octulosonate biosynthesis; 3-deoxy-D-manno-octulosonate from D-ribulose 5-phosphate: step 2/3. It functions in the pathway bacterial outer membrane biogenesis; lipopolysaccharide biosynthesis. The protein is 2-dehydro-3-deoxyphosphooctonate aldolase of Xanthomonas oryzae pv. oryzae (strain MAFF 311018).